We begin with the raw amino-acid sequence, 2299 residues long: Acetyl-CoA carboxylase dmxL1 (2299 aa).

Over residues 21–39 (TSIPASVPASAPPSSSAPH) the composition is skewed to low complexity. Positions 21-41 (TSIPASVPASAPPSSSAPHAA) are disordered. In terms of domain architecture, Biotin carboxylation spans 75 to 583 (VITNVLIANN…TTGWLDELIT (509 aa)). The region spanning 227–424 (QVAIDADGIV…LPAAQLQIAM (198 aa)) is the ATP-grasp 1 domain. 258–315 (AKEIGFPVMIKASEGGGGKGIRKCEQEEGFEALYNAASSEIPGSPIFIMKLAGNARHL) serves as a coordination point for ATP. Mg(2+) is bound by residues Glu-381, Glu-395, and Asn-397. The Mn(2+) site is built by Glu-381, Glu-395, and Asn-397. The Biotinyl-binding domain maps to 710–784 (LEQENDPTQL…EPGDVLGILT (75 aa)). The residue at position 751 (Lys-751) is an N6-biotinyllysine. The tract at residues 1159-1208 (DMEMSSQLSTPSTPATPPTPPYENGKQSKGVGSISDMSNLIENPDKEPTR) is disordered. Positions 1539-1887 (PTKALEWLQP…KKNTLVPIGP (349 aa)) constitute a CoA carboxyltransferase N-terminal domain. The CoA carboxyltransferase C-terminal domain maps to 1891–2205 (PWDRDIVCSP…EEHILKRIAT (315 aa)).

It depends on biotin as a cofactor. Requires Mg(2+) as cofactor. Mn(2+) is required as a cofactor.

The enzyme catalyses hydrogencarbonate + acetyl-CoA + ATP = malonyl-CoA + ADP + phosphate + H(+). It carries out the reaction N(6)-biotinyl-L-lysyl-[protein] + hydrogencarbonate + ATP = N(6)-carboxybiotinyl-L-lysyl-[protein] + ADP + phosphate + H(+). It functions in the pathway secondary metabolite biosynthesis. Its pathway is lipid metabolism; malonyl-CoA biosynthesis; malonyl-CoA from acetyl-CoA: step 1/1. Acetyl-CoA carboxylase; part of the gene cluster that mediates the biosynthesis of the dimeric xanthones cryptosporioptides. The pathway begins with the synthesis of atrochrysone thioester by the polyketide synthase dmx-nrPKS. The atrochrysone carboxyl ACP thioesterase dmxR1 then breaks the thioester bond and releases the atrochrysone carboxylic acid from dmx-nrPKS. Atrochrysone carboxylic acid is decarboxylated by the decarboxylase dmxR15, and oxidized by the anthrone oxygenase dmxR16 to yield emodin. Emodin is then reduced to emodin hydroquinone by the oxidoreductase dmxR7. A-ring reduction by the short chain dehydrogenase dmxR18, dehydration by the scytalone dehydratase-like protein dmxR17 and probable spontaneous re-oxidation, results in overall deoxygenation to chrysophanol. Baeyer-Villiger oxidation by the Baeyer-Villiger monooxygenase (BVMO) dmxR6 then yields monodictylactone in equilibrium with monodictyphenone. In the case of the cryptosporioptides biosynthesis, monodictylactone is reduced at C-12 to an alcohol (by the short chain dehydrogenases dmxR12 or dmxR8) and hydroxylated at C-5 by dmxR9, yielding the electron-rich aromatic which could eliminate H(2)O to form the ortho-quinonemethide, followed by tautomerisation to paraquinone and complete the formal reduction to produce the 10-methylgroup. Conjugate addition of C-4a-OH to the resulting paraquinone by the monooxygenase dmxR10 then gives cyclohexadienone, which is then reduced at C-5 by the short chain dehydrogenase dmxR3 to give the dihydroxanthone. The 6,7-epoxide in the cryptosporioptides could be introduced by the cytochrome P450 monooxygenase dmxL3. The highly reducing PKS dmxL2 manufactures butyrate, which is further carboxylated by dmxL1 to form ethylmalonate. It is not yet clear whether the carboxylation occurs while the butyrate is attached to the ACP of dmxL2, but this unusual fungal metabolite could then be esterified to O-5 by the O-acetyltransferase dmxR13. Finally, dimerization performed by dmxR5 gives the observed dimers cryptosporioptides A, B and C as the final products of the pathway. This chain is Acetyl-CoA carboxylase dmxL1, found in Cryptosporiopsis sp. (strain 8999).